A 212-amino-acid polypeptide reads, in one-letter code: Troponin I, cardiac muscle (212 aa).

The span at 1–11 shows a compositional bias: polar residues; that stretch reads MADRSGGSTAG. A disordered region spans residues 1–45; that stretch reads MADRSGGSTAGDTVPAPPPVRRRSSANYRAYATEPHAKKKSKISA. Position 2 is an N-acetylalanine (Ala-2). At Ser-5 the chain carries Phosphoserine. Ser-24 and Ser-25 each carry phosphoserine; by PKA and PKD/PRKD1. Tyr-28 is modified (phosphotyrosine). Residue Thr-33 is modified to Phosphothreonine; by STK4/MST1. An involved in binding TNC region spans residues 34 to 81; sequence EPHAKKKSKISASRKLQLKTLMLQIAKQELEREAEERRGEKGRALSTR. Residues Ser-44 and Ser-46 each carry the phosphoserine; by PKC/PRKCE modification. Thr-53 is subject to Phosphothreonine; by STK4/MST1. At Ser-79 the chain carries Phosphoserine. At Thr-80 the chain carries Phosphothreonine. The tract at residues 131-151 is involved in binding TNC and actin; that stretch reads NQKIFDLRGKFKRPTLRRVRI. Thr-145 is modified (phosphothreonine; by STK4/MST1). Position 152 is a phosphoserine; by PAK3 (Ser-152). Thr-183 bears the Phosphothreonine mark. Ser-201 carries the post-translational modification Phosphoserine.

Belongs to the troponin I family. In terms of assembly, interacts with TRIM63. Binds to actin and tropomyosin. Interacts with STK4/MST1. Phosphorylated at Ser-24 and Ser-25 by PRKD1; phosphorylation reduces myofilament calcium sensitivity. Phosphorylated preferentially at Thr-33. Phosphorylation by STK4/MST1 alters its binding affinity to TNNC1 (cardiac Tn-C) and TNNT2 (cardiac Tn-T). Phosphorylated at Ser-44 and Ser-46 by PRKCE; phosphorylation increases myocardium contractile dysfunction.

In terms of biological role, troponin I is the inhibitory subunit of troponin, the thin filament regulatory complex which confers calcium-sensitivity to striated muscle actomyosin ATPase activity. The chain is Troponin I, cardiac muscle (TNNI3) from Bos taurus (Bovine).